The following is a 1083-amino-acid chain: Carbamoyl phosphate synthase large chain (1083 aa).

Residues 1 to 402 are carboxyphosphate synthetic domain; that stretch reads MPRRDDIKKI…SFQKALRGLE (402 aa). 12 residues coordinate ATP: Arg129, Arg169, Gly175, Gly176, Glu208, Ile210, Glu215, Gly241, Val242, His243, Gln285, and Glu299. One can recognise an ATP-grasp 1 domain in the interval 133 to 328; that stretch reads KQAMDKIGLD…IAKIAAKLAV (196 aa). Mg(2+) contacts are provided by Gln285, Glu299, and Asn301. 3 residues coordinate Mn(2+): Gln285, Glu299, and Asn301. Residues 403 to 557 form an oligomerization domain region; the sequence is VGAFGFGSDP…YSTYESETEV (155 aa). The interval 558–944 is carbamoyl phosphate synthetic domain; sequence PAKGDKKRVV…AFAKSQLAAG (387 aa). The ATP-grasp 2 domain occupies 683–878; the sequence is SSLIDELGLR…VANLATKVMA (196 aa). Arg719, Arg758, Leu760, Glu765, Gly790, Val791, His792, Ser793, Gln833, and Glu849 together coordinate ATP. Mg(2+)-binding residues include Gln833, Glu849, and Asn851. Residues Gln833, Glu849, and Asn851 each coordinate Mn(2+). The region spanning 945–1083 is the MGS-like domain; the sequence is TVLPESGKIF…SLQRRYAQNV (139 aa). The segment at 945-1083 is allosteric domain; sequence TVLPESGKIF…SLQRRYAQNV (139 aa).

Belongs to the CarB family. As to quaternary structure, composed of two chains; the small (or glutamine) chain promotes the hydrolysis of glutamine to ammonia, which is used by the large (or ammonia) chain to synthesize carbamoyl phosphate. Tetramer of heterodimers (alpha,beta)4. Mg(2+) is required as a cofactor. Mn(2+) serves as cofactor.

The enzyme catalyses hydrogencarbonate + L-glutamine + 2 ATP + H2O = carbamoyl phosphate + L-glutamate + 2 ADP + phosphate + 2 H(+). It catalyses the reaction hydrogencarbonate + NH4(+) + 2 ATP = carbamoyl phosphate + 2 ADP + phosphate + 2 H(+). Its pathway is amino-acid biosynthesis; L-arginine biosynthesis; carbamoyl phosphate from bicarbonate: step 1/1. It participates in pyrimidine metabolism; UMP biosynthesis via de novo pathway; (S)-dihydroorotate from bicarbonate: step 1/3. Large subunit of the glutamine-dependent carbamoyl phosphate synthetase (CPSase). CPSase catalyzes the formation of carbamoyl phosphate from the ammonia moiety of glutamine, carbonate, and phosphate donated by ATP, constituting the first step of 2 biosynthetic pathways, one leading to arginine and/or urea and the other to pyrimidine nucleotides. The large subunit (synthetase) binds the substrates ammonia (free or transferred from glutamine from the small subunit), hydrogencarbonate and ATP and carries out an ATP-coupled ligase reaction, activating hydrogencarbonate by forming carboxy phosphate which reacts with ammonia to form carbamoyl phosphate. The sequence is that of Carbamoyl phosphate synthase large chain from Rhodopirellula baltica (strain DSM 10527 / NCIMB 13988 / SH1).